A 524-amino-acid chain; its full sequence is Serine/threonine-protein kinase PAK 2 (524 aa).

Positions 1-81 (MSDNGELEDK…PEISPPSDFE (81 aa)) are disordered. Ser-2 is subject to N-acetylserine. Phosphoserine occurs at positions 2, 20, 55, and 58. Thr-60 carries the post-translational modification Phosphothreonine. Lys-62 is modified (N6-acetyllysine). A Phosphoserine modification is found at Ser-64. A compositionally biased stretch (basic and acidic residues) spans 67 to 81 (KEKERPEISPPSDFE). The GTPase-binding stretch occupies residues 69-112 (KERPEISPPSDFEHTIHVGFDAVTGEFTGMPEQWARLLQTSNIT). The autoregulatory region stretch occupies residues 69–137 (KERPEISPPS…KFYDSNTVKQ (69 aa)). In terms of domain architecture, CRIB spans 74-87 (ISPPSDFEHTIHVG). Residues 88 to 248 (FDAVTGEFTG…IVSIGDPKKK (161 aa)) form a linker region. At Lys-128 the chain carries N6-acetyllysine. Thr-134 bears the Phosphothreonine mark. Tyr-139 is subject to Phosphotyrosine. Ser-141 is modified (phosphoserine). Phosphothreonine is present on Thr-143. Ser-152 is modified (phosphoserine). 2 positions are modified to phosphothreonine: Thr-159 and Thr-169. The span at 169 to 178 (TEEDDDDEEA) shows a compositional bias: acidic residues. The interval 169 to 188 (TEEDDDDEEAAPPVIAPRPD) is disordered. Ser-197 is subject to Phosphoserine. The interval 204-228 (APVGDSHVDSGAKSSDKQKKKTKMT) is disordered. Basic and acidic residues predominate over residues 209–228 (SHVDSGAKSSDKQKKKTKMT). The Nuclear localization signal motif lies at 245–251 (PKKKYTR). The Protein kinase domain maps to 249–500 (YTRYEKIGQG…AKELLQHPFL (252 aa)). Residues 255–263 (IGQGASGTV) and Lys-278 contribute to the ATP site. The Proton acceptor role is filled by Asp-368. Thr-402 bears the Phosphothreonine; by autocatalysis mark.

As to quaternary structure, interacts tightly with GTP-bound but not GDP-bound CDC42/p21 and RAC1. Interacts with SH3MD4. Interacts with SCRIB. Interacts with ARHGEF7 and GIT1. PAK-2p34 interacts with ARHGAP10. Interacts with RAC1. Post-translationally, full-length PAK2 is autophosphorylated when activated by CDC42/p21. Following cleavage, both peptides, PAK-2p27 and PAK-2p34, become highly autophosphorylated. Autophosphorylation of PAK-2p27 can occur in the absence of any effectors and is dependent on phosphorylation of Thr-402, because PAK-2p27 is acting as an exogenous substrate. During apoptosis proteolytically cleaved by caspase-3 or caspase-3-like proteases to yield active PAK-2p34. In terms of processing, ubiquitinated, leading to its proteasomal degradation.

It is found in the cytoplasm. Its subcellular location is the nucleus. The protein resides in the perinuclear region. It localises to the membrane. The enzyme catalyses L-seryl-[protein] + ATP = O-phospho-L-seryl-[protein] + ADP + H(+). It carries out the reaction L-threonyl-[protein] + ATP = O-phospho-L-threonyl-[protein] + ADP + H(+). With respect to regulation, activated by binding small G proteins. Binding of GTP-bound CDC42 or RAC1 to the autoregulatory region releases monomers from the autoinhibited dimer, enables phosphorylation of Thr-402 and allows the kinase domain to adopt an active structure. Following caspase cleavage, autophosphorylated PAK-2p34 is constitutively active. Functionally, serine/threonine protein kinase that plays a role in a variety of different signaling pathways including cytoskeleton regulation, cell motility, cell cycle progression, apoptosis or proliferation. Acts as a downstream effector of the small GTPases CDC42 and RAC1. Activation by the binding of active CDC42 and RAC1 results in a conformational change and a subsequent autophosphorylation on several serine and/or threonine residues. Full-length PAK2 stimulates cell survival and cell growth. Phosphorylates MAPK4 and MAPK6 and activates the downstream target MAPKAPK5, a regulator of F-actin polymerization and cell migration. Phosphorylates JUN and plays an important role in EGF-induced cell proliferation. Phosphorylates many other substrates including histone H4 to promote assembly of H3.3 and H4 into nucleosomes, BAD, ribosomal protein S6, or MBP. Phosphorylates CASP7, thereby preventing its activity. Additionally, associates with ARHGEF7 and GIT1 to perform kinase-independent functions such as spindle orientation control during mitosis. On the other hand, apoptotic stimuli such as DNA damage lead to caspase-mediated cleavage of PAK2, generating PAK-2p34, an active p34 fragment that translocates to the nucleus and promotes cellular apoptosis involving the JNK signaling pathway. Caspase-activated PAK2 phosphorylates MKNK1 and reduces cellular translation. This chain is Serine/threonine-protein kinase PAK 2 (PAK2), found in Oryctolagus cuniculus (Rabbit).